The following is a 305-amino-acid chain: LysM and putative peptidoglycan-binding domain-containing protein 3 (305 aa).

Residues 1–216 (MAGRNQNRTV…PYYGADWGIG (216 aa)) lie on the Extracellular side of the membrane. Asparagine 7 and asparagine 26 each carry an N-linked (GlcNAc...) asparagine glycan. Position 55 is a phosphoserine (serine 55). Residues 65–109 (LTKDIQEGDTLNAVALQYCCTVADIKRVNNLISDQDFFALRSIKI) form the LysM domain. The N-linked (GlcNAc...) asparagine glycan is linked to asparagine 199. Residues 217-237 (WWTAVVIMLIVGIITPVFYLL) traverse the membrane as a helical segment. Topologically, residues 238–305 (YYEILAKVDV…PQAHDAQHKT (68 aa)) are cytoplasmic. Residues 253-305 (VGSSHLHPGLTPPTQHREMENEIGPTKGIPVGQQDDHKLYRQDPQAHDAQHKT) are disordered. Over residues 286–305 (QDDHKLYRQDPQAHDAQHKT) the composition is skewed to basic and acidic residues.

Its subcellular location is the cell membrane. The protein resides in the golgi apparatus. Its function is as follows. Essential for Golgi structural integrity. This is LysM and putative peptidoglycan-binding domain-containing protein 3 (Lysmd3) from Mus musculus (Mouse).